We begin with the raw amino-acid sequence, 387 residues long: MEKVVIVDAIRTPMGRSKGGAFRHVRAEDLSAHLMRSLLSRNPSVDPATLDDIYWGCVQQTLEQGFNIARNAALLAEIPHSVPATTVNRLCGSSMQALHDAARAIMVGDARTCLIGGVEHMGHVPMSHGVDFHPGLSRNVAKAAGMMGLTAEMLARMHGISREMQDRFAARSHQRAAAATQAGHFAAEIVAVCGHDADGVLKRYDADEVIRPETTVESLMALRPAFDPVDGTVTAGSSSALSDGAAAMLIMSGSQARQQGLKARARIRSMAVVGCDPSIMGYGPVPASQLALKRAGLSIADIGVFELNEAFAAQTLPCIKDLGLMDKLDEKVNLNGGAIALGHPLGCSGARISTTLLNLMERRDAQFGLATMCIGLGQGIATVFERI.

Cys-91 acts as the Acyl-thioester intermediate in catalysis. Catalysis depends on proton acceptor residues His-343 and Cys-373.

The protein belongs to the thiolase-like superfamily. Thiolase family. In terms of assembly, heterotetramer of two alpha chains (FadB) and two beta chains (FadA).

The protein resides in the cytoplasm. The catalysed reaction is an acyl-CoA + acetyl-CoA = a 3-oxoacyl-CoA + CoA. It participates in lipid metabolism; fatty acid beta-oxidation. In terms of biological role, catalyzes the final step of fatty acid oxidation in which acetyl-CoA is released and the CoA ester of a fatty acid two carbons shorter is formed. This is 3-ketoacyl-CoA thiolase from Erwinia tasmaniensis (strain DSM 17950 / CFBP 7177 / CIP 109463 / NCPPB 4357 / Et1/99).